A 288-amino-acid chain; its full sequence is Beta-lactamase CARB-3 (288 aa).

A signal peptide spans Met-1 to Ala-17. The active-site Acyl-ester intermediate is Ser-65. An intrachain disulfide couples Cys-72 to Cys-118. Substrate is bound at residue Arg-229–Gly-231.

It belongs to the class-A beta-lactamase family.

It carries out the reaction a beta-lactam + H2O = a substituted beta-amino acid. Hydrolyzes both carbenicillin and oxacillin. The chain is Beta-lactamase CARB-3 (carB3) from Pseudomonas aeruginosa.